The chain runs to 270 residues: Metallo-beta-lactamase type 2 (270 aa).

The first 28 residues, 1 to 28, serve as a signal peptide directing secretion; it reads MELPNIMHPVAKLSTALAAALMLSGCMP. The Zn(2+) site is built by H120, H122, D124, H189, and C208. K211 and N220 together coordinate substrate. A Zn(2+)-binding site is contributed by H250.

It belongs to the metallo-beta-lactamase superfamily. Class-B beta-lactamase family. As to quaternary structure, monomer. Requires Zn(2+) as cofactor.

It is found in the periplasm. The enzyme catalyses a beta-lactam + H2O = a substituted beta-amino acid. Its activity is regulated as follows. Inhibits by captopril, thiorphan, dimercaprol and tiopronin. This enzyme is not susceptible to inactivation by the beta-lactamase-blocking agents clavulanic acid. In terms of biological role, confers resistance to the different beta-lactams antibiotics (penicillin, cephalosporin and carbapenem) via the hydrolysis of the beta-lactam ring. Does not confer resistance to the polymixin colistin or the fluoroquinolone ciprofloxacin. This Klebsiella pneumoniae protein is Metallo-beta-lactamase type 2.